A 300-amino-acid chain; its full sequence is Bifunctional protein FolD (300 aa).

NADP(+) is bound by residues 172-174 (GRS), Ser206, and Ile247.

This sequence belongs to the tetrahydrofolate dehydrogenase/cyclohydrolase family. As to quaternary structure, homodimer.

It catalyses the reaction (6R)-5,10-methylene-5,6,7,8-tetrahydrofolate + NADP(+) = (6R)-5,10-methenyltetrahydrofolate + NADPH. It carries out the reaction (6R)-5,10-methenyltetrahydrofolate + H2O = (6R)-10-formyltetrahydrofolate + H(+). The protein operates within one-carbon metabolism; tetrahydrofolate interconversion. Its function is as follows. Catalyzes the oxidation of 5,10-methylenetetrahydrofolate to 5,10-methenyltetrahydrofolate and then the hydrolysis of 5,10-methenyltetrahydrofolate to 10-formyltetrahydrofolate. The protein is Bifunctional protein FolD of Rhodopirellula baltica (strain DSM 10527 / NCIMB 13988 / SH1).